The following is a 226-amino-acid chain: MKYKNIKRGIFIERPNRFIAHVEIDSVTEICHVKNTGRCKELLIPGTVVYIQKSDNPKRKTGFDLISVIKGSRHINMDSQAPNKLVQEWMEKGNLFSGITLVKAESRYKNSRFDFYVETKEDKIFIEVKGVTLEENNIAMFPDAPTERGVRHIKELCDSLHDGYKAYIIFVIQMKDVDYFIPNETTHREFSDALKSAYRKGVNILALDCVVEEGFIEIEKQVEVRL.

The protein belongs to the SfsA family.

The polypeptide is Sugar fermentation stimulation protein homolog (Ruminiclostridium cellulolyticum (strain ATCC 35319 / DSM 5812 / JCM 6584 / H10) (Clostridium cellulolyticum)).